The following is an 882-amino-acid chain: Ion channel DMI1 (882 aa).

Residues 1-122 (MAKSNEESSN…PSSSSITKQQ (122 aa)) are disordered. The span at 48–62 (TSTTKTDFSEQQWNY) shows a compositional bias: polar residues. Residues 78–95 (PPPPPSKPPVNLIPPHPR) are compositionally biased toward pro residues. Residues 107–117 (SSLLPQPSSSS) show a composition bias toward low complexity. 4 consecutive transmembrane segments (helical) span residues 129–149 (SPIFYLLVICCIILVPYSAYL), 192–212 (TIALYIVLFTLILPFVLYKYL), 255–275 (LALLCATLFLIAFGGLALYAV), and 307–327 (IVSVSISAGGMLIFAMMLGLV). RCK N-terminal domains lie at 348-489 (RNHV…ETVV) and 608-757 (PEKI…DKSI). Residues 378 to 403 (VIVVLAEKEKEEMEMDIAKLEFDFMG) adopt a coiled-coil conformation.

The protein belongs to the castor/pollux (TC 1.A.1.23) family. In terms of assembly, interacts (via c-terminus) with CNGC15A, CNGC15B and CNGC15C (via N-terminus). The Nod factor has no effect on these interactions, implying that the complex is maintained after activation. In terms of tissue distribution, mainly expressed in roots and nodules. Also detected in pods, flowers, leaves, and stems.

It localises to the nucleus membrane. Its function is as follows. Required for early signal transduction events leading to endosymbiosis. Acts early in a signal transduction chain leading from the perception of Nod factor to the activation of calcium spiking. Also involved in mycorrhizal symbiosis. May be involved in the regulation of the calcium channel responsible for calcium spiking by mobilizing another cation, and thereby altering the membrane potential. The chain is Ion channel DMI1 from Medicago truncatula (Barrel medic).